Here is a 518-residue protein sequence, read N- to C-terminus: AarF domain-containing kinase 1 (518 aa).

One can recognise a Protein kinase domain in the interval 149-468 (SFEREPLGTA…SKCCVQSSYA (320 aa)). Residues 155 to 163 (LGTASLAQV) and K177 contribute to the ATP site. D309 (proton acceptor) is an active-site residue.

The protein belongs to the protein kinase superfamily. ADCK protein kinase family.

The protein resides in the mitochondrion. In terms of biological role, essential for maintaining mitochondrial cristae formation and mitochondrial function by acting via YME1L to regulate the mitochondrial structural proteins Opa1 and Mitofilin. This function is likely to be kinase-independent. Functions in tracheal development and larval molting probably by acting in sterol modification and/or intracellular lipid trafficking. The action of this enzyme is not yet clear. It is not known if it has protein kinase activity and what type of substrate it would phosphorylate (Ser, Thr or Tyr). This is AarF domain-containing kinase 1 from Drosophila melanogaster (Fruit fly).